A 156-amino-acid chain; its full sequence is dCTP deaminase (156 aa).

DCTP contacts are provided by residues 79 to 84 (RSSLAR), Asp-95, Gln-124, and Tyr-138.

The protein belongs to the dCTP deaminase family. In terms of assembly, homotrimer.

The enzyme catalyses dCTP + H2O + H(+) = dUTP + NH4(+). The protein operates within pyrimidine metabolism; dUMP biosynthesis; dUMP from dCTP (dUTP route): step 1/2. Its function is as follows. Catalyzes the deamination of dCTP to dUTP. In Pyrococcus furiosus (strain ATCC 43587 / DSM 3638 / JCM 8422 / Vc1), this protein is dCTP deaminase.